The sequence spans 236 residues: Peroxisomal membrane protein 11D (236 aa).

Position 2 is an N-acetylglycine (Gly2). The Cytoplasmic portion of the chain corresponds to 2–92 (GTTLDVSRAE…LPLVLLGKSK (91 aa)). A helical transmembrane segment spans residues 93–109 (NALLSTFLFLDQIVWLG). At 110–207 (RSGIYKNKER…LLQLAPTKIT (98 aa)) the chain is on the lumenal side. Residues 208 to 227 (PRVTGAFGFITSIISCYQLL) form a helical membrane-spanning segment. The Cytoplasmic segment spans residues 228–236 (PTRPKIKTP).

It belongs to the peroxin-11 family. As to quaternary structure, homooligomer. Interacts with ARC5 and FIS1B on peroxisomes. Expressed in developing siliques.

Its subcellular location is the peroxisome membrane. Its function is as follows. Involved in peroxisomal proliferation. Promotes peroxisomal duplication, aggregation or elongation without fission. This Arabidopsis thaliana (Mouse-ear cress) protein is Peroxisomal membrane protein 11D (PEX11D).